A 366-amino-acid polypeptide reads, in one-letter code: Chorismate synthase (366 aa).

Positions 48 and 54 each coordinate NADP(+). FMN is bound by residues 129–131 (RSS), 241–242 (NA), G290, 305–309 (KPTSS), and R331.

This sequence belongs to the chorismate synthase family. As to quaternary structure, homotetramer. FMNH2 is required as a cofactor.

It catalyses the reaction 5-O-(1-carboxyvinyl)-3-phosphoshikimate = chorismate + phosphate. It participates in metabolic intermediate biosynthesis; chorismate biosynthesis; chorismate from D-erythrose 4-phosphate and phosphoenolpyruvate: step 7/7. In terms of biological role, catalyzes the anti-1,4-elimination of the C-3 phosphate and the C-6 proR hydrogen from 5-enolpyruvylshikimate-3-phosphate (EPSP) to yield chorismate, which is the branch point compound that serves as the starting substrate for the three terminal pathways of aromatic amino acid biosynthesis. This reaction introduces a second double bond into the aromatic ring system. This Nitrobacter hamburgensis (strain DSM 10229 / NCIMB 13809 / X14) protein is Chorismate synthase.